The primary structure comprises 95 residues: Antitoxin VapB (95 aa).

Antitoxin component of a type II toxin-antitoxin (TA) system. Partially neutralizes the RNase activity of cognate toxin VapC. This Rickettsia bellii (strain RML369-C) protein is Antitoxin VapB.